We begin with the raw amino-acid sequence, 431 residues long: ATP-dependent RNA helicase DBP8 (431 aa).

A Q motif motif is present at residues 2-30 (ADFKSLGLSKWLTESLRAMKITQPTAIQK). A Helicase ATP-binding domain is found at 33–209 (IPKILEGRDC…NAPVQKGKPP (177 aa)). 46 to 53 (AKTGSGKT) is a binding site for ATP. A DEAD box motif is present at residues 155-158 (DEAD). The Helicase C-terminal domain occupies 242 to 389 (YLYQLLTCEE…TNKVHDTAVI (148 aa)). Residues 404-431 (LMAMQKENFGERKRQQKKKQNDGKSLRS) form a disordered region. Positions 411–431 (NFGERKRQQKKKQNDGKSLRS) are enriched in basic and acidic residues.

This sequence belongs to the DEAD box helicase family. DDX49/DBP8 subfamily. As to quaternary structure, interacts with ESF2.

The protein localises to the nucleus. It is found in the nucleolus. The catalysed reaction is ATP + H2O = ADP + phosphate + H(+). Its function is as follows. ATP-binding RNA helicase involved in 40S ribosomal subunit biogenesis and is required for the normal formation of 18S rRNAs through pre-rRNA processing at A0, A1 and A2 sites. Required for vegetative growth. The sequence is that of ATP-dependent RNA helicase DBP8 (DBP8) from Saccharomyces cerevisiae (strain YJM789) (Baker's yeast).